Reading from the N-terminus, the 445-residue chain is N-succinylarginine dihydrolase (445 aa).

Substrate-binding positions include 19 to 28 (AGLSFGNVAS), N110, and 137 to 138 (HR). E174 is a catalytic residue. R214 contributes to the substrate binding site. H250 is a catalytic residue. Substrate-binding residues include D252 and N363. The active-site Nucleophile is C369.

It belongs to the succinylarginine dihydrolase family. In terms of assembly, homodimer.

The catalysed reaction is N(2)-succinyl-L-arginine + 2 H2O + 2 H(+) = N(2)-succinyl-L-ornithine + 2 NH4(+) + CO2. The protein operates within amino-acid degradation; L-arginine degradation via AST pathway; L-glutamate and succinate from L-arginine: step 2/5. In terms of biological role, catalyzes the hydrolysis of N(2)-succinylarginine into N(2)-succinylornithine, ammonia and CO(2). The polypeptide is N-succinylarginine dihydrolase (Shewanella pealeana (strain ATCC 700345 / ANG-SQ1)).